The primary structure comprises 202 residues: Na(+)-translocating NADH-quinone reductase subunit E (202 aa).

Helical transmembrane passes span 11–31 (SVFV…FLAI), 35–55 (IDAA…TVPV), 81–101 (FLGL…MEMV), 114–134 (GVFL…LLMV), 144–164 (VVFG…LAGI), and 182–202 (ITFI…GIAL).

This sequence belongs to the NqrDE/RnfAE family. In terms of assembly, composed of six subunits; NqrA, NqrB, NqrC, NqrD, NqrE and NqrF.

It is found in the cell inner membrane. The catalysed reaction is a ubiquinone + n Na(+)(in) + NADH + H(+) = a ubiquinol + n Na(+)(out) + NAD(+). Its function is as follows. NQR complex catalyzes the reduction of ubiquinone-1 to ubiquinol by two successive reactions, coupled with the transport of Na(+) ions from the cytoplasm to the periplasm. NqrA to NqrE are probably involved in the second step, the conversion of ubisemiquinone to ubiquinol. This is Na(+)-translocating NADH-quinone reductase subunit E from Saccharophagus degradans (strain 2-40 / ATCC 43961 / DSM 17024).